Here is a 526-residue protein sequence, read N- to C-terminus: Phosphoenolpyruvate carboxykinase (ATP) 2 (526 aa).

Substrate contacts are provided by arginine 55, tyrosine 190, and lysine 196. Residues lysine 196, histidine 215, and 231 to 239 (GLSGTGKTT) contribute to the ATP site. Mn(2+) contacts are provided by lysine 196 and histidine 215. Aspartate 252 lines the Mn(2+) pocket. Residues glutamate 280, arginine 317, and threonine 442 each coordinate ATP. Substrate is bound at residue arginine 317.

This sequence belongs to the phosphoenolpyruvate carboxykinase (ATP) family. It depends on Mn(2+) as a cofactor.

It is found in the cytoplasm. It carries out the reaction oxaloacetate + ATP = phosphoenolpyruvate + ADP + CO2. Its pathway is carbohydrate biosynthesis; gluconeogenesis. Involved in the gluconeogenesis. Catalyzes the conversion of oxaloacetate (OAA) to phosphoenolpyruvate (PEP) through direct phosphoryl transfer between the nucleoside triphosphate and OAA. The chain is Phosphoenolpyruvate carboxykinase (ATP) 2 from Moorella thermoacetica (strain ATCC 39073 / JCM 9320).